Consider the following 321-residue polypeptide: Porin Omp2a (321 aa).

The signal sequence occupies residues 1 to 22 (MNIKSLLLGSAAALVAASGAQA).

Belongs to the alphaproteobacteria porin family. As to quaternary structure, monomer.

Its subcellular location is the cell outer membrane. Its function is as follows. Forms passive diffusion pores that allow small molecular weight hydrophilic materials across the outer membrane. This Brucella abortus (strain S19) protein is Porin Omp2a (omp2a).